The sequence spans 1386 residues: Rab3 GTPase-activating protein non-catalytic subunit (1386 aa).

Positions 31-69 (GALRRDPSKTSNWEDDSWGAWEETEPQEPEEEGNTSKTQ) are disordered. The residue at position 38 (serine 38) is a Phosphoserine. The span at 43-63 (WEDDSWGAWEETEPQEPEEEG) shows a compositional bias: acidic residues. Serine 448 bears the Phosphoserine mark. Residue threonine 899 is modified to Phosphothreonine. Position 914 is a phosphoserine (serine 914). A compositionally biased stretch (basic and acidic residues) spans 959 to 973 (REKDVENPDEPREGI). The segment at 959-982 (REKDVENPDEPREGIARSPPEVSE) is disordered. Serine 976 is subject to Phosphoserine.

The protein belongs to the Rab3-GAP regulatory subunit family. In terms of assembly, the Rab3 GTPase-activating complex is a heterodimer composed of Rab3gap1 and Rab3gap2. The Rab3 GTPase-activating complex interacts with DMXL2. Interacts with LMAN1.

The protein localises to the cytoplasm. The protein resides in the endoplasmic reticulum. Functionally, regulatory subunit of the Rab3 GTPase-activating (Rab3GAP) complex composed of RAB3GAP1 and RAB3GAP2, which has GTPase-activating protein (GAP) activity towards various Rab3 subfamily members (RAB3A, RAB3B, RAB3C and RAB3D), RAB5A and RAB43, and guanine nucleotide exchange factor (GEF) activity towards RAB18. As part of the Rab3GAP complex, acts as a GAP for Rab3 proteins by converting active RAB3-GTP to the inactive form RAB3-GDP. Rab3 proteins are involved in regulated exocytosis of neurotransmitters and hormones. The Rab3GAP complex acts as a GEF for RAB18 by promoting the conversion of inactive RAB18-GDP to the active form RAB18-GTP. Recruits and stabilizes RAB18 at the cis-Golgi membrane in fibroblasts where RAB18 is most likely activated. Also involved in RAB18 recruitment at the endoplasmic reticulum (ER) membrane where it maintains proper ER structure. Required for normal eye and brain development. May participate in neurodevelopmental processes such as proliferation, migration and differentiation before synapse formation, and non-synaptic vesicular release of neurotransmitters. The sequence is that of Rab3 GTPase-activating protein non-catalytic subunit from Rattus norvegicus (Rat).